The chain runs to 354 residues: Histidinol-phosphate aminotransferase (354 aa).

Position 210 is an N6-(pyridoxal phosphate)lysine (lysine 210).

This sequence belongs to the class-II pyridoxal-phosphate-dependent aminotransferase family. Histidinol-phosphate aminotransferase subfamily. As to quaternary structure, homodimer. Requires pyridoxal 5'-phosphate as cofactor.

It carries out the reaction L-histidinol phosphate + 2-oxoglutarate = 3-(imidazol-4-yl)-2-oxopropyl phosphate + L-glutamate. The protein operates within amino-acid biosynthesis; L-histidine biosynthesis; L-histidine from 5-phospho-alpha-D-ribose 1-diphosphate: step 7/9. This is Histidinol-phosphate aminotransferase from Clostridium botulinum (strain Okra / Type B1).